Consider the following 403-residue polypeptide: D-mannonate dehydratase Caul1427 (403 aa).

Substrate is bound by residues N38 and H123. The Proton donor/acceptor role is filled by Y160. D211 contributes to the Mg(2+) binding site. The active-site Proton donor/acceptor is H213. E237 and E263 together coordinate Mg(2+). The substrate site is built by E263, R284, H313, D317, and E340.

This sequence belongs to the mandelate racemase/muconate lactonizing enzyme family. GalD subfamily. Requires Mg(2+) as cofactor.

It catalyses the reaction D-mannonate = 2-dehydro-3-deoxy-D-gluconate + H2O. The protein operates within carbohydrate metabolism; pentose and glucuronate interconversion. Catalyzes the dehydration of D-mannonate. Has no detectable activity with a panel of 70 other acid sugars (in vitro). This chain is D-mannonate dehydratase Caul1427, found in Caulobacter sp. (strain K31).